We begin with the raw amino-acid sequence, 1041 residues long: Putative transcription elongation factor SPT5 homolog 1 (1041 aa).

The segment at 1 to 133 (MPRSRDEDDE…ERGDRRYERR (133 aa)) is disordered. Composition is skewed to acidic residues over residues 7–32 (EDDELDGDYEALDLEEEEEEDEEEEE), 53–69 (DYAEEDSQEEDDDDEDY), and 99–114 (DDEDEEEEDEAEDDFI). Phosphoserine is present on S59. Over residues 122–133 (PDERGDRRYERR) the composition is skewed to basic and acidic residues. 4 consecutive KOW domains span residues 273-300 (DLSRDTWVRMKIGTYKGDLAKVVDVDNV), 425-452 (HFMKGDAVIVIKGDLKNLKGWVEKVDEE), 477-504 (YFEPGNHVKVVSGTHEGATGMVVKVDQH), and 601-628 (VIAVKDDVRVIEGPSKGKQGPVKHIYKG). 2 disordered regions span residues 662–713 (NRNG…GDDS) and 768–921 (DTSR…GTGL). Over residues 691–703 (GRGGGYNNSGGRH) the composition is skewed to gly residues. In terms of domain architecture, KOW 5 spans 712 to 739 (DSLLGTTVKIRLGPFKGYRGPVVEVKGN). Over residues 804–814 (DGMRTPMRDRA) the composition is skewed to basic and acidic residues. Composition is skewed to polar residues over residues 835 to 844 (SWGTSPQYQP) and 893 to 904 (TPGQPMTPSSAS). Positions 988–1015 (PPRKSDRVKIVGGQYRGSTGKLIGIDGS) constitute a KOW 6 domain.

It belongs to the SPT5 family.

Its subcellular location is the nucleus. In terms of biological role, may regulate transcription elongation by RNA polymerase II. May enhance transcriptional pausing at sites proximal to the promoter, which may in turn facilitate the assembly of an elongation competent RNA polymerase II complex. In Arabidopsis thaliana (Mouse-ear cress), this protein is Putative transcription elongation factor SPT5 homolog 1.